The sequence spans 403 residues: Protein LAZ1 homolog 2 (403 aa).

6 consecutive transmembrane segments (helical) span residues 16–36 (SLIIGGSFATVAICLSLYSIL), 50–70 (WIVSVLFMVPVYATESIISLS), 162–182 (MILKTFCAFLTFLLELLGVYG), 191–211 (GYPYIVVVLNFSQMWALFCLV), 236–256 (IVFATWWQGFGIALLCYYGIL), and 269–289 (FLICIEMAIAAVAHLFVFPAE). Residues 381 to 403 (SDGKEETEVTEEVTVETSVPPKE) form a disordered region.

This sequence belongs to the TMEM184 family.

It is found in the membrane. The sequence is that of Protein LAZ1 homolog 2 from Arabidopsis thaliana (Mouse-ear cress).